The chain runs to 307 residues: Pseudouridine-5'-phosphate glycosidase (307 aa).

Glu-28 acts as the Proton donor in catalysis. Positions 89 and 109 each coordinate substrate. Asp-141 is a binding site for Mn(2+). 143 to 145 contributes to the substrate binding site; sequence SAD. Catalysis depends on Lys-162, which acts as the Nucleophile.

It belongs to the pseudouridine-5'-phosphate glycosidase family. As to quaternary structure, homotrimer. Mn(2+) serves as cofactor.

It catalyses the reaction D-ribose 5-phosphate + uracil = psi-UMP + H2O. Catalyzes the reversible cleavage of pseudouridine 5'-phosphate (PsiMP) to ribose 5-phosphate and uracil. Functions biologically in the cleavage direction, as part of a pseudouridine degradation pathway. This is Pseudouridine-5'-phosphate glycosidase from Staphylococcus aureus (strain MW2).